A 352-amino-acid polypeptide reads, in one-letter code: Anthranilate phosphoribosyltransferase (352 aa).

5-phospho-alpha-D-ribose 1-diphosphate is bound by residues G94, 97 to 98 (GS), S102, 104 to 107 (NIST), 122 to 130 (KHGNRAVSS), and S134. G94 is a binding site for anthranilate. Residue S106 participates in Mg(2+) binding. Residue N125 participates in anthranilate binding. R180 provides a ligand contact to anthranilate. Residues D239 and E240 each contribute to the Mg(2+) site.

This sequence belongs to the anthranilate phosphoribosyltransferase family. In terms of assembly, homodimer. The cofactor is Mg(2+).

The enzyme catalyses N-(5-phospho-beta-D-ribosyl)anthranilate + diphosphate = 5-phospho-alpha-D-ribose 1-diphosphate + anthranilate. It participates in amino-acid biosynthesis; L-tryptophan biosynthesis; L-tryptophan from chorismate: step 2/5. Functionally, catalyzes the transfer of the phosphoribosyl group of 5-phosphorylribose-1-pyrophosphate (PRPP) to anthranilate to yield N-(5'-phosphoribosyl)-anthranilate (PRA). The protein is Anthranilate phosphoribosyltransferase of Geobacter sp. (strain M21).